The following is a 179-amino-acid chain: Large ribosomal subunit protein uL5 (179 aa).

This sequence belongs to the universal ribosomal protein uL5 family. As to quaternary structure, part of the 50S ribosomal subunit; part of the 5S rRNA/L5/L18/L25 subcomplex. Contacts the 5S rRNA and the P site tRNA. Forms a bridge to the 30S subunit in the 70S ribosome.

Its function is as follows. This is one of the proteins that bind and probably mediate the attachment of the 5S RNA into the large ribosomal subunit, where it forms part of the central protuberance. In the 70S ribosome it contacts protein S13 of the 30S subunit (bridge B1b), connecting the 2 subunits; this bridge is implicated in subunit movement. Contacts the P site tRNA; the 5S rRNA and some of its associated proteins might help stabilize positioning of ribosome-bound tRNAs. This is Large ribosomal subunit protein uL5 from Variovorax paradoxus (strain S110).